The following is a 628-amino-acid chain: Neutral/alkaline invertase 1, mitochondrial (628 aa).

The transit peptide at 1 to 35 directs the protein to the mitochondrion; that stretch reads MAAAAISHLRRGAPRHARALLYLSTRRFSSSSAAG. The span at 79 to 90 shows a compositional bias: low complexity; it reads ASSAPPLESPPI. The segment at 79-113 is disordered; it reads ASSAPPLESPPIEELPDDATPPPEEEPGLPAPEKD.

Belongs to the glycosyl hydrolase 100 family. As to expression, expressed in roots, leaf and stems.

The protein resides in the mitochondrion. It catalyses the reaction Hydrolysis of terminal non-reducing beta-D-fructofuranoside residues in beta-D-fructofuranosides.. In terms of biological role, mitochondrial invertase that cleaves sucrose into glucose and fructose. The chain is Neutral/alkaline invertase 1, mitochondrial from Oryza sativa subsp. japonica (Rice).